Here is a 258-residue protein sequence, read N- to C-terminus: Regulatory protein RecX (258 aa).

The protein belongs to the RecX family.

Its subcellular location is the cytoplasm. In terms of biological role, modulates RecA activity. This chain is Regulatory protein RecX, found in Streptococcus sanguinis (strain SK36).